Here is a 401-residue protein sequence, read N- to C-terminus: Ornithine aminotransferase (401 aa).

At lysine 258 the chain carries N6-(pyridoxal phosphate)lysine.

Belongs to the class-III pyridoxal-phosphate-dependent aminotransferase family. OAT subfamily. Requires pyridoxal 5'-phosphate as cofactor.

The protein resides in the cytoplasm. The catalysed reaction is a 2-oxocarboxylate + L-ornithine = L-glutamate 5-semialdehyde + an L-alpha-amino acid. It functions in the pathway amino-acid biosynthesis; L-proline biosynthesis; L-glutamate 5-semialdehyde from L-ornithine: step 1/1. In terms of biological role, catalyzes the interconversion of ornithine to glutamate semialdehyde. The protein is Ornithine aminotransferase of Bacillus subtilis (strain 168).